We begin with the raw amino-acid sequence, 1067 residues long: Isoleucine--tRNA ligase (1067 aa).

The 'HIGH' region motif lies at 49 to 59; the sequence is PYVSGAIHLGT. Residues 625–629 carry the 'KMSKS' region motif; the sequence is KMSKS. An ATP-binding site is contributed by Lys-628.

This sequence belongs to the class-I aminoacyl-tRNA synthetase family. IleS type 2 subfamily. In terms of assembly, monomer. Requires Zn(2+) as cofactor.

It is found in the cytoplasm. It catalyses the reaction tRNA(Ile) + L-isoleucine + ATP = L-isoleucyl-tRNA(Ile) + AMP + diphosphate. Its function is as follows. Catalyzes the attachment of isoleucine to tRNA(Ile). As IleRS can inadvertently accommodate and process structurally similar amino acids such as valine, to avoid such errors it has two additional distinct tRNA(Ile)-dependent editing activities. One activity is designated as 'pretransfer' editing and involves the hydrolysis of activated Val-AMP. The other activity is designated 'posttransfer' editing and involves deacylation of mischarged Val-tRNA(Ile). The protein is Isoleucine--tRNA ligase of Pyrococcus abyssi (strain GE5 / Orsay).